The chain runs to 600 residues: ATP-dependent ubiquitin transferase-like protein Cap2 (600 aa).

An E2-like domain region spans residues 1–158 (MSTVVQQVPA…QEKLATTGDA (158 aa)). The active-site For E2-like domain is the Cys-109. Residues 159–373 (VELPAFPDQS…DQLRTRGEAA (215 aa)) are linker domain. The interval 375–600 (DIRSKKVLII…GTVEKEPHEY (226 aa)) is adenylation plus E1-like domain. Cys-548 serves as the catalytic For E1-like domain.

In the C-terminal section; belongs to the HesA/MoeB/ThiF family. In terms of assembly, crystallizes as a Cap2 homodimer bound on each side by a CdnD monomer.

Its function is as follows. CD-NTase priming component of a CBASS antiviral system. CBASS (cyclic oligonucleotide-based antiphage signaling system) provides immunity against bacteriophages. The CD-NTase protein (CdnD) synthesizes cyclic nucleotides in response to infection; these serve as specific second messenger signals. The signals activate a diverse range of effectors, leading to bacterial cell death and thus abortive phage infection. A type II-C(AAG) CBASS system. In terms of biological role, primes CdnD; acts as a protein transferase, conjugating CdnD, the CD-NTase, to unidentified target(s) in the cell via an E1-E2 ubiquitin transferase-like mechanism. Upon phage infection CdnD activates and makes cyclic nucleotides. During the conjugation reaction CdnD is transiently attached to AMP. Protein conjugation requires ATP. Functionally, protects E.coli against phage T2 infection. When the cdnD-cap2-cap3-cap4 operon is introduced in E.coli there is a more than 10(3) decrease in the efficiency of T2 plaque formation. The operon does not protect against phage T5 and only about 10-fold against T7. This is ATP-dependent ubiquitin transferase-like protein Cap2 from Enterobacter hormaechei subsp. hoffmannii (strain UCI 50).